Here is a 55-residue protein sequence, read N- to C-terminus: UPF0434 protein BARBAKC583_1098 (55 aa).

It belongs to the UPF0434 family.

The polypeptide is UPF0434 protein BARBAKC583_1098 (Bartonella bacilliformis (strain ATCC 35685 / KC583 / Herrer 020/F12,63)).